The following is a 799-amino-acid chain: Protein-lysine N-methyltransferase SMYD4 (799 aa).

Position 112–114 (112–114) interacts with S-adenosyl-L-methionine; that stretch reads RSA. The region spanning 233–570 is the SET domain; sequence LSVSLCTHPL…KGQEILHCYG (338 aa). Residues Cys-296, Cys-299, Cys-309, Cys-312, Cys-318, Cys-322, His-331, and Cys-335 each contribute to the Zn(2+) site. An MYND-type zinc finger spans residues 296–335; the sequence is CHRCLKHTLATVPCGSCSYAKYCSQECMQQAWDLYHSTEC. Residues 535–536, Tyr-569, and Phe-591 each bind S-adenosyl-L-methionine; that span reads NH.

This sequence belongs to the class V-like SAM-binding methyltransferase superfamily. In terms of assembly, interacts (via MYND-type zinc finger) with HDAC1.

The protein resides in the nucleus. The protein localises to the cytoplasm. It catalyses the reaction L-lysyl-[protein] + S-adenosyl-L-methionine = N(6)-methyl-L-lysyl-[protein] + S-adenosyl-L-homocysteine + H(+). In terms of biological role, protein-lysine N-methyltransferase. Monomethylates PRMT5, modulating its transcriptional activity. May also act as a histone methyltransferase. Plays a critical role in cardiac development. Acts as a key epigenetic regulator of gene expression during cardiac development via its dual activities as a methyltransferase and negative regulator of HDAC1. This Mus musculus (Mouse) protein is Protein-lysine N-methyltransferase SMYD4 (Smyd4).